The chain runs to 336 residues: Dihydroorotate dehydrogenase (quinone) (336 aa).

FMN-binding positions include 62 to 66 (AGLDK) and threonine 86. Lysine 66 is a substrate binding site. 111 to 115 (NRMGF) contributes to the substrate binding site. The FMN site is built by asparagine 139 and asparagine 172. A substrate-binding site is contributed by asparagine 172. Serine 175 acts as the Nucleophile in catalysis. Asparagine 177 is a binding site for substrate. FMN-binding residues include lysine 217 and threonine 245. 246-247 (NT) contacts substrate. Residues glycine 268, glycine 297, and 318–319 (YS) each bind FMN.

It belongs to the dihydroorotate dehydrogenase family. Type 2 subfamily. As to quaternary structure, monomer. It depends on FMN as a cofactor.

The protein localises to the cell membrane. The catalysed reaction is (S)-dihydroorotate + a quinone = orotate + a quinol. Its pathway is pyrimidine metabolism; UMP biosynthesis via de novo pathway; orotate from (S)-dihydroorotate (quinone route): step 1/1. Its function is as follows. Catalyzes the conversion of dihydroorotate to orotate with quinone as electron acceptor. The chain is Dihydroorotate dehydrogenase (quinone) from Vibrio atlanticus (strain LGP32) (Vibrio splendidus (strain Mel32)).